The following is a 231-amino-acid chain: MVHILVRKVEATNMFFSSWTLVFLAVGIIIEEWAELKLGPQKPTITHSPWICCTPLWPSDGLEVIRNILIVVLSLSFMHNLLLGFEFTYMIPQTKYTLIMTACLAFLTGILLLGALLLYHHMLRQGESVYYSSYKISWIIFTAYLNVLFLFISGFLSLLQYKQPIDGSGSLIPRSARKSQVMEQHGVSIKVVSLPAGTAMPRSIVRLHSAHMKEDSPERLNIQARRVTWAL.

Over 1–13 the chain is Cytoplasmic; the sequence is MVHILVRKVEATN. Residues 14–34 form a helical membrane-spanning segment; sequence MFFSSWTLVFLAVGIIIEEWA. At 35 to 67 the chain is on the extracellular side; the sequence is ELKLGPQKPTITHSPWICCTPLWPSDGLEVIRN. A helical transmembrane segment spans residues 68 to 88; it reads ILIVVLSLSFMHNLLLGFEFT. At 89-97 the chain is on the cytoplasmic side; the sequence is YMIPQTKYT. A helical membrane pass occupies residues 98 to 118; sequence LIMTACLAFLTGILLLGALLL. Residues 119–135 are Extracellular-facing; that stretch reads YHHMLRQGESVYYSSYK. Residues 136 to 156 traverse the membrane as a helical segment; the sequence is ISWIIFTAYLNVLFLFISGFL. The Cytoplasmic segment spans residues 157–231; the sequence is SLLQYKQPID…IQARRVTWAL (75 aa). An RVxF motif is present at residues 225 to 229; that stretch reads RRVTW.

As to quaternary structure, interacts (via RVxF motif) with PPP1CC.

The protein localises to the cytoplasmic vesicle. It localises to the secretory vesicle. The protein resides in the acrosome membrane. Probably inhibits protein phosphatase 1 (PP1) in sperm via binding to catalytic subunit PPP1CC. In Bos taurus (Bovine), this protein is Transmembrane protein 225 (TMEM225).